Consider the following 251-residue polypeptide: Probable transcriptional regulatory protein cauri_1421 (251 aa).

Positions 1–21 are disordered; that stretch reads MAGHSKWATTKHKKAANDAKR.

The protein belongs to the TACO1 family.

It localises to the cytoplasm. The chain is Probable transcriptional regulatory protein cauri_1421 from Corynebacterium aurimucosum (strain ATCC 700975 / DSM 44827 / CIP 107346 / CN-1) (Corynebacterium nigricans).